Here is a 689-residue protein sequence, read N- to C-terminus: Glycine--tRNA ligase beta subunit (689 aa).

It belongs to the class-II aminoacyl-tRNA synthetase family. As to quaternary structure, tetramer of two alpha and two beta subunits.

The protein resides in the cytoplasm. The catalysed reaction is tRNA(Gly) + glycine + ATP = glycyl-tRNA(Gly) + AMP + diphosphate. The polypeptide is Glycine--tRNA ligase beta subunit (Shewanella sediminis (strain HAW-EB3)).